Reading from the N-terminus, the 278-residue chain is Large ribosomal subunit protein uL2 (278 aa).

Disordered regions lie at residues 29-53 (PEKS…TTRH) and 223-278 (GVAM…GKKR). Positions 255–268 (GRTRRPGKESDKLI) are enriched in basic and acidic residues. Positions 269 to 278 (VRRRRTGKKR) are enriched in basic residues.

This sequence belongs to the universal ribosomal protein uL2 family. Part of the 50S ribosomal subunit. Forms a bridge to the 30S subunit in the 70S ribosome.

Its function is as follows. One of the primary rRNA binding proteins. Required for association of the 30S and 50S subunits to form the 70S ribosome, for tRNA binding and peptide bond formation. It has been suggested to have peptidyltransferase activity; this is somewhat controversial. Makes several contacts with the 16S rRNA in the 70S ribosome. This Kineococcus radiotolerans (strain ATCC BAA-149 / DSM 14245 / SRS30216) protein is Large ribosomal subunit protein uL2.